Here is a 205-residue protein sequence, read N- to C-terminus: N-(5'-phosphoribosyl)anthranilate isomerase (205 aa).

Belongs to the TrpF family.

It carries out the reaction N-(5-phospho-beta-D-ribosyl)anthranilate = 1-(2-carboxyphenylamino)-1-deoxy-D-ribulose 5-phosphate. Its pathway is amino-acid biosynthesis; L-tryptophan biosynthesis; L-tryptophan from chorismate: step 3/5. This chain is N-(5'-phosphoribosyl)anthranilate isomerase (TRP1), found in Zygosaccharomyces bailii.